A 232-amino-acid chain; its full sequence is Peroxisomal protein PEX21 (232 aa).

Cys5 is covalently cross-linked (Glycyl cysteine thioester (Cys-Gly) (interchain with G-Cter in ubiquitin)).

This sequence belongs to the peroxin-21 family. Interacts with PEX7. Post-translationally, monoubiquitinated at Cys-5; acts as a signal for PEX21 extraction and is required for proper export from peroxisomes and recycling.

It is found in the cytoplasm. It localises to the cytosol. Its subcellular location is the peroxisome. Mediates peroxisomal import of proteins containing a C-terminal PTS2-type peroxisomal targeting signal via its interaction with PEX7. Interaction with PEX7 only takes place when PEX7 is associated with cargo proteins containing a PTS2 peroxisomal targeting signal. PEX7 along with PTS2-containing cargo proteins are then translocated through the PEX13-PEX14 docking complex together with PEX21. The sequence is that of Peroxisomal protein PEX21 (PEX21) from Candida glabrata (strain ATCC 2001 / BCRC 20586 / JCM 3761 / NBRC 0622 / NRRL Y-65 / CBS 138) (Yeast).